The following is a 613-amino-acid chain: Dihydroxy-acid dehydratase (613 aa).

Asp81 lines the Mg(2+) pocket. Cys122 is a [2Fe-2S] cluster binding site. Asp123 and Lys124 together coordinate Mg(2+). An N6-carboxylysine modification is found at Lys124. Cys195 serves as a coordination point for [2Fe-2S] cluster. Glu491 is a binding site for Mg(2+). The active-site Proton acceptor is the Ser517.

The protein belongs to the IlvD/Edd family. In terms of assembly, homodimer. [2Fe-2S] cluster serves as cofactor. Requires Mg(2+) as cofactor.

The enzyme catalyses (2R)-2,3-dihydroxy-3-methylbutanoate = 3-methyl-2-oxobutanoate + H2O. It catalyses the reaction (2R,3R)-2,3-dihydroxy-3-methylpentanoate = (S)-3-methyl-2-oxopentanoate + H2O. Its pathway is amino-acid biosynthesis; L-isoleucine biosynthesis; L-isoleucine from 2-oxobutanoate: step 3/4. It participates in amino-acid biosynthesis; L-valine biosynthesis; L-valine from pyruvate: step 3/4. Its function is as follows. Functions in the biosynthesis of branched-chain amino acids. Catalyzes the dehydration of (2R,3R)-2,3-dihydroxy-3-methylpentanoate (2,3-dihydroxy-3-methylvalerate) into 2-oxo-3-methylpentanoate (2-oxo-3-methylvalerate) and of (2R)-2,3-dihydroxy-3-methylbutanoate (2,3-dihydroxyisovalerate) into 2-oxo-3-methylbutanoate (2-oxoisovalerate), the penultimate precursor to L-isoleucine and L-valine, respectively. The protein is Dihydroxy-acid dehydratase of Hyphomonas neptunium (strain ATCC 15444).